A 224-amino-acid chain; its full sequence is Putative cobalt transport protein CbiM (224 aa).

6 helical membrane-spanning segments follow: residues 8-28, 41-61, 75-95, 108-128, 138-158, and 169-189; these read LPPLWCLIYYIICIPFIVYGI, AMPMLALSGAFMFILSSLKMP, FGAVFFGPAVVGVLSVIVLVF, LGANVLSMGIIGPLCGYAVWL, EIAMFFTAFVADLMTYVVTAI, and FFTALVTFLGIFAVTQIPLAI.

It belongs to the CbiM family. Forms an energy-coupling factor (ECF) transporter complex composed of an ATP-binding protein (A component, CbiO), a transmembrane protein (T component, CbiQ) and 2 possible substrate-capture proteins (S components, CbiM and CbiN) of unknown stoichimetry.

It localises to the cell membrane. The protein operates within cofactor biosynthesis; adenosylcobalamin biosynthesis. Functionally, part of the energy-coupling factor (ECF) transporter complex CbiMNOQ involved in cobalt import. In Methanosphaera stadtmanae (strain ATCC 43021 / DSM 3091 / JCM 11832 / MCB-3), this protein is Putative cobalt transport protein CbiM.